A 493-amino-acid polypeptide reads, in one-letter code: Poly(ribitol-phosphate) alpha-N-acetylglucosaminyltransferase (493 aa).

UDP-N-acetyl-alpha-D-glucosamine is bound by residues glycine 17, lysine 59, histidine 249, arginine 326, lysine 331, threonine 383, and 403–411 (EGQGLSMIE).

It belongs to the glycosyltransferase group 1 family. In terms of assembly, homotrimer.

The protein resides in the cytoplasm. It catalyses the reaction 4-O-[(D-ribitylphospho)(n)-di{(2R)-glycerylphospho}]-N-acetyl-beta-D-mannosaminyl-(1-&gt;4)-N-acetyl-alpha-D-glucosaminyl di-trans,octa-cis-undecaprenyl diphosphate + n UDP-N-acetyl-alpha-D-glucosamine = 4-O-([2-N-acetyl-alpha-D-glucosaminyl-1-D-ribitylphospho](n)-di{[2R]-1-glycerylphospho})-N-acetyl-beta-D-mannosaminyl-(1-&gt;4)-N-acetyl-alpha-D-glucosaminyl di-trans,octa-cis-undecaprenyl diphosphate + n UDP + n H(+). The protein operates within cell wall biogenesis; poly(ribitol phosphate) teichoic acid biosynthesis. Attaches N-acetyl-alpha-D-glucosamine residues to poly(RboP)-wall teichoic acids (WTAs). In Staphylococcus aureus (strain COL), this protein is Poly(ribitol-phosphate) alpha-N-acetylglucosaminyltransferase.